A 78-amino-acid polypeptide reads, in one-letter code: Large ribosomal subunit protein bL28 (78 aa).

This sequence belongs to the bacterial ribosomal protein bL28 family.

This is Large ribosomal subunit protein bL28 from Trichormus variabilis (strain ATCC 29413 / PCC 7937) (Anabaena variabilis).